The chain runs to 123 residues: Large ribosomal subunit protein bL12 (123 aa).

The protein belongs to the bacterial ribosomal protein bL12 family. Homodimer. Part of the ribosomal stalk of the 50S ribosomal subunit. Forms a multimeric L10(L12)X complex, where L10 forms an elongated spine to which 2 to 4 L12 dimers bind in a sequential fashion. Binds GTP-bound translation factors.

Functionally, forms part of the ribosomal stalk which helps the ribosome interact with GTP-bound translation factors. Is thus essential for accurate translation. The protein is Large ribosomal subunit protein bL12 of Mycoplasmopsis agalactiae (strain NCTC 10123 / CIP 59.7 / PG2) (Mycoplasma agalactiae).